Here is a 609-residue protein sequence, read N- to C-terminus: Phosphoprotein 85 (609 aa).

The tract at residues 461–609 is disordered; it reads QNEGRASSRA…RSTETNDERL (149 aa). Residues 465–478 are compositionally biased toward low complexity; the sequence is RASSRASSSHSTST. Over residues 484–495 the composition is skewed to polar residues; sequence PQSGRSTPTSIL. Composition is skewed to low complexity over residues 503 to 513 and 552 to 563; these read SNSRSSSVSFS and SPQSASSNNSMS. A compositionally biased stretch (basic and acidic residues) spans 600–609; sequence RSTETNDERL.

The protein belongs to the herpesviridae pp85 family. Post-translationally, phosphorylated.

It localises to the virion tegument. The protein resides in the host cytoplasm. The sequence is that of Phosphoprotein 85 (U14) from Homo sapiens (Human).